A 281-amino-acid polypeptide reads, in one-letter code: Voltage-dependent L-type calcium channel subunit alpha-1S (281 aa).

An III repeat occupies 1–8 (VGFVIVTF). The dihydropyridine binding stretch occupies residues 1–17 (VGFVIVTFQEQGESEYK). The stretch at 45–281 (NPYQYQIWYV…TCGTGFAYFY (237 aa)) is one IV repeat. Residues 59 to 80 (YFEYLMFFLIMLNTICLGMQHY) traverse the membrane as a helical segment. N81 carries N-linked (GlcNAc...) asparagine glycosylation. The helical transmembrane segment at 89-110 (VSDILNVAFTVLFTLEMILKLM) threads the bilayer. Residues 121 to 140 (PWNVFDFLIVIGSIIDVILS) form a helical membrane-spanning segment. Residues 153–171 (ITFFRLFRVMRLVKLLSRG) form a helical membrane-spanning segment. A helical transmembrane segment spans residues 190-210 (YVALLIVMLFFIYAVIGMQMF). Residues 233–251 (AVLLLFRCATGEAWQEILL) constitute an intramembrane region (pore-forming). A Selectivity filter of repeat IV motif is present at residues 242–245 (TGEA). The segment at 258–281 (RCDPESDYAEGEEYTCGTGFAYFY) is dihydropyridine binding. C259 and C273 are joined by a disulfide. The segment at 270–281 (EYTCGTGFAYFY) is phenylalkylamine binding.

Belongs to the calcium channel alpha-1 subunit (TC 1.A.1.11) family. CACNA1S subfamily. Component of a calcium channel complex consisting of a pore-forming alpha subunit (CACNA1S) and the ancillary subunits CACNB1 or CACNB2, CACNG1 and CACNA2D1. The channel complex contains alpha, beta, gamma and delta subunits in a 1:1:1:1 ratio, i.e. it contains either CACNB1 or CACNB2. CACNA1S channel activity is modulated by the auxiliary subunits (CACNB1 or CACNB2, CACNG1 and CACNA2D1). Interacts with DYSF and JSRP1. Interacts with RYR1. Interacts with CALM. Post-translationally, the alpha-1S subunit is found in two isoforms in the skeletal muscle: a minor form of 212 kDa containing the complete amino acid sequence, and a major form of 190 kDa derived from the full-length form by post-translational proteolysis close to Phe-1690. In terms of processing, both the minor and major forms are phosphorylated in vitro by PKA. Phosphorylation by PKA activates the calcium channel.

It localises to the cell membrane. The protein resides in the sarcolemma. It is found in the T-tubule. The catalysed reaction is Ca(2+)(in) = Ca(2+)(out). Channel activity is blocked by dihydropyridines (DHP), phenylalkylamines, and by benzothiazepines. Pore-forming, alpha-1S subunit of the voltage-gated calcium channel that gives rise to L-type calcium currents in skeletal muscle. Calcium channels containing the alpha-1S subunit play an important role in excitation-contraction coupling in skeletal muscle via their interaction with RYR1, which triggers Ca(2+) release from the sarcplasmic reticulum and ultimately results in muscle contraction. Long-lasting (L-type) calcium channels belong to the 'high-voltage activated' (HVA) group. This is Voltage-dependent L-type calcium channel subunit alpha-1S (CACNA1S) from Gallus gallus (Chicken).